Here is a 254-residue protein sequence, read N- to C-terminus: MSLKKQIPIIFENTHYFIVNKPPGIPSQPPDCRTWGRTHPNLDPTPLLERFKAIYYSHREVELCRTVHRLDHCVTGGMLIAKTKDGSVKFSRFLQKGGNNGYKLQRKYVAIVESSGRFNKPNNYEIKYGPKYNFLISHGGREITKFKEVDENCIVLQLVTGKKHQIRNHVSQILNQPILNDKRHGSTVNFPELFNDQIALHSACIITKIGLQTKTHLIPMEHNNTGQLWSRKYVNEEGEFTLPIKEVLLENWDQ.

D71 is a catalytic residue.

It belongs to the pseudouridine synthase RluA family.

Its subcellular location is the mitochondrion. It carries out the reaction uridine(2819) in 21S rRNA = pseudouridine(2819) in 21S rRNA. Its function is as follows. Pseudouridylate synthase responsible for the pseudouridine-2819 formation in mitochondrial 21S rRNA. May modulate the efficiency or the fidelity of the mitochondrial translation machinery. The sequence is that of 21S rRNA pseudouridine(2819) synthase (PUS5) from Saccharomyces cerevisiae (strain ATCC 204508 / S288c) (Baker's yeast).